We begin with the raw amino-acid sequence, 256 residues long: Protein FixA (256 aa).

It belongs to the ETF beta-subunit/FixA family. Heterodimer of FixA and FixB.

It participates in amine and polyamine metabolism; carnitine metabolism. Its function is as follows. Required for anaerobic carnitine reduction. May bring reductant to CaiA. This Salmonella paratyphi B (strain ATCC BAA-1250 / SPB7) protein is Protein FixA.